The chain runs to 642 residues: Threonine--tRNA ligase (642 aa).

The region spanning methionine 1–threonine 61 is the TGS domain. The tract at residues aspartate 243–proline 534 is catalytic. Cysteine 334, histidine 385, and histidine 511 together coordinate Zn(2+).

This sequence belongs to the class-II aminoacyl-tRNA synthetase family. Homodimer. The cofactor is Zn(2+).

The protein resides in the cytoplasm. The catalysed reaction is tRNA(Thr) + L-threonine + ATP = L-threonyl-tRNA(Thr) + AMP + diphosphate + H(+). Catalyzes the attachment of threonine to tRNA(Thr) in a two-step reaction: L-threonine is first activated by ATP to form Thr-AMP and then transferred to the acceptor end of tRNA(Thr). Also edits incorrectly charged L-seryl-tRNA(Thr). This chain is Threonine--tRNA ligase, found in Histophilus somni (strain 129Pt) (Haemophilus somnus).